The primary structure comprises 626 residues: Janus kinase and microtubule-interacting protein 1 (626 aa).

The segment at 1–25 is disordered; the sequence is MSKKGRSKGDKPEAETDSVQMANEE. The segment at 1–365 is mediates association with microtubules; the sequence is MSKKGRSKGD…KLKSLTRENV (365 aa). Coiled-coil stretches lie at residues 13–255 and 284–413; these read EAET…EAER and ERDV…DDLS. The segment at 365–626 is mediates interaction with TYK2 and GABBR1; that stretch reads VEMKEKLSAQ…ILFEPKLKFM (262 aa). A Phosphoserine modification is found at Ser382. The segment covering 452–461 has biased composition (polar residues); it reads ETLSETSYNT. The interval 452–481 is disordered; that stretch reads ETLSETSYNTDRTDRTPATPEEDLDETTTR. Thr470 bears the Phosphothreonine mark. A coiled-coil region spans residues 490-604; that stretch reads QLTREYQALQ…EFRVLELEVR (115 aa).

This sequence belongs to the JAKMIP family. In terms of assembly, homodimer. Interacts with JAK1 and TYK2. Forms a complex with GABBR1 and KIF5B/kinesin-1. In terms of processing, phosphorylated.

It is found in the cytoplasm. The protein resides in the cytoskeleton. Its subcellular location is the membrane. Functionally, associates with microtubules and may play a role in the microtubule-dependent transport of the GABA-B receptor. May play a role in JAK1 signaling and regulate microtubule cytoskeleton rearrangements. The chain is Janus kinase and microtubule-interacting protein 1 (Jakmip1) from Mus musculus (Mouse).